The sequence spans 199 residues: IMP cyclohydrolase (199 aa).

It belongs to the archaeal IMP cyclohydrolase family.

It carries out the reaction IMP + H2O = 5-formamido-1-(5-phospho-D-ribosyl)imidazole-4-carboxamide. It participates in purine metabolism; IMP biosynthesis via de novo pathway; IMP from 5-formamido-1-(5-phospho-D-ribosyl)imidazole-4-carboxamide: step 1/1. Catalyzes the cyclization of 5-formylamidoimidazole-4-carboxamide ribonucleotide to IMP. In Methanothrix thermoacetophila (strain DSM 6194 / JCM 14653 / NBRC 101360 / PT) (Methanosaeta thermophila), this protein is IMP cyclohydrolase.